The following is a 166-amino-acid chain: Protein SprT (166 aa).

A SprT-like domain is found at 19–164; it reads REHLAKANLK…CVHCGDLLVA (146 aa). Zn(2+) is bound at residue histidine 78. Glutamate 79 is an active-site residue. Zn(2+) is bound at residue histidine 82.

The protein belongs to the SprT family. The cofactor is Zn(2+).

It localises to the cytoplasm. The sequence is that of Protein SprT from Klebsiella pneumoniae (strain 342).